The primary structure comprises 460 residues: UDP-N-acetylmuramoylalanine--D-glutamate ligase (460 aa).

120-126 (GSNGKTT) is a binding site for ATP.

It belongs to the MurCDEF family.

The protein resides in the cytoplasm. It catalyses the reaction UDP-N-acetyl-alpha-D-muramoyl-L-alanine + D-glutamate + ATP = UDP-N-acetyl-alpha-D-muramoyl-L-alanyl-D-glutamate + ADP + phosphate + H(+). Its pathway is cell wall biogenesis; peptidoglycan biosynthesis. Cell wall formation. Catalyzes the addition of glutamate to the nucleotide precursor UDP-N-acetylmuramoyl-L-alanine (UMA). The protein is UDP-N-acetylmuramoylalanine--D-glutamate ligase of Lactobacillus johnsonii (strain CNCM I-12250 / La1 / NCC 533).